The sequence spans 1065 residues: Probable importin-7 homolog (1065 aa).

The region spanning 25 to 98 (AEAQLQQIKV…KENLIDLLVH (74 aa)) is the Importin N-terminal domain. Residues 958–996 (ENGGDLGEDEGDNFDDQNDDDDQDSEEDLFEDEDTPDFE) are disordered. A compositionally biased stretch (acidic residues) spans 963 to 996 (LGEDEGDNFDDQNDDDDQDSEEDLFEDEDTPDFE).

The protein belongs to the importin beta family.

Its subcellular location is the cytoplasm. It localises to the nucleus. Functionally, may function in nuclear protein import. The polypeptide is Probable importin-7 homolog (Dictyostelium discoideum (Social amoeba)).